The primary structure comprises 358 residues: Carbamoyl phosphate synthase small chain (358 aa).

CPSase stretches follow at residues 1 to 168 (MYNR…PALG) and 1 to 171 (MYNR…GRGR). L-glutamine contacts are provided by Ser46, Gly220, and Gly222. Residues 172 to 358 (RVVLVDLGMK…FIKNIDNNMK (187 aa)) form the Glutamine amidotransferase type-1 domain. Cys247 (nucleophile) is an active-site residue. L-glutamine-binding residues include Met248, Gln251, Asn289, Gly291, and Tyr292. Catalysis depends on residues His332 and Glu334.

It belongs to the CarA family. Composed of two chains; the small (or glutamine) chain promotes the hydrolysis of glutamine to ammonia, which is used by the large (or ammonia) chain to synthesize carbamoyl phosphate. Tetramer of heterodimers (alpha,beta)4.

The catalysed reaction is hydrogencarbonate + L-glutamine + 2 ATP + H2O = carbamoyl phosphate + L-glutamate + 2 ADP + phosphate + 2 H(+). It carries out the reaction L-glutamine + H2O = L-glutamate + NH4(+). It functions in the pathway amino-acid biosynthesis; L-arginine biosynthesis; carbamoyl phosphate from bicarbonate: step 1/1. The protein operates within pyrimidine metabolism; UMP biosynthesis via de novo pathway; (S)-dihydroorotate from bicarbonate: step 1/3. Functionally, small subunit of the glutamine-dependent carbamoyl phosphate synthetase (CPSase). CPSase catalyzes the formation of carbamoyl phosphate from the ammonia moiety of glutamine, carbonate, and phosphate donated by ATP, constituting the first step of 2 biosynthetic pathways, one leading to arginine and/or urea and the other to pyrimidine nucleotides. The small subunit (glutamine amidotransferase) binds and cleaves glutamine to supply the large subunit with the substrate ammonia. The protein is Carbamoyl phosphate synthase small chain of Fusobacterium nucleatum subsp. nucleatum (strain ATCC 25586 / DSM 15643 / BCRC 10681 / CIP 101130 / JCM 8532 / KCTC 2640 / LMG 13131 / VPI 4355).